A 231-amino-acid polypeptide reads, in one-letter code: MEEITINIDKIKINDDWKEFLRDEFQKKYFLEIKKQYLNAINQNIVIYPPANLIFNAFNLCPLKEIKIIILGQDPYHQPNQAMGLSFSVPKNVKIPPSLNNIFKELQNDLNITPAKSGDLSSWAKQGVLLLNSILSVEANKAASHSSWGWQEFSDAIIHKLSNEKSGLVFMLWGNYAKNKEILIDNTKHLILKAAHPSPLARTGFLGCKHFSKANEFLKKVGKIPIDWKIV.

The active-site Proton acceptor is Asp74.

It belongs to the uracil-DNA glycosylase (UDG) superfamily. UNG family.

It localises to the cytoplasm. The catalysed reaction is Hydrolyzes single-stranded DNA or mismatched double-stranded DNA and polynucleotides, releasing free uracil.. Functionally, excises uracil residues from the DNA which can arise as a result of misincorporation of dUMP residues by DNA polymerase or due to deamination of cytosine. The protein is Uracil-DNA glycosylase of Campylobacter jejuni (strain RM1221).